The sequence spans 123 residues: Large ribosomal subunit protein uL29 (123 aa).

Lys-19 is subject to N6-acetyllysine. Lys-25 is covalently cross-linked (Glycyl lysine isopeptide (Lys-Gly) (interchain with G-Cter in SUMO2)). Ser-29 bears the Phosphoserine mark. Lys-43 bears the N6-acetyllysine mark.

This sequence belongs to the universal ribosomal protein uL29 family. Component of the large ribosomal subunit.

It localises to the cytoplasm. Functionally, component of the large ribosomal subunit. The ribosome is a large ribonucleoprotein complex responsible for the synthesis of proteins in the cell. The sequence is that of Large ribosomal subunit protein uL29 (RPL35) from Sus scrofa (Pig).